A 199-amino-acid polypeptide reads, in one-letter code: Holliday junction branch migration complex subunit RuvA (199 aa).

The domain I stretch occupies residues 1 to 63 (MIGCLIGEVF…EDAQQLYGFS (63 aa)). The interval 64 to 142 (DAQEKTIFRT…TLAQGTSSAA (79 aa)) is domain II. The segment at 143–150 (ALPQIQFV) is flexible linker. The interval 150-199 (VSNSPVAEAEAALQSLGYKPLEAQKAVAAVKADYTESADIIRAALKSMMK) is domain III.

This sequence belongs to the RuvA family. As to quaternary structure, homotetramer. Forms an RuvA(8)-RuvB(12)-Holliday junction (HJ) complex. HJ DNA is sandwiched between 2 RuvA tetramers; dsDNA enters through RuvA and exits via RuvB. An RuvB hexamer assembles on each DNA strand where it exits the tetramer. Each RuvB hexamer is contacted by two RuvA subunits (via domain III) on 2 adjacent RuvB subunits; this complex drives branch migration. In the full resolvosome a probable DNA-RuvA(4)-RuvB(12)-RuvC(2) complex forms which resolves the HJ.

Its subcellular location is the cytoplasm. In terms of biological role, the RuvA-RuvB-RuvC complex processes Holliday junction (HJ) DNA during genetic recombination and DNA repair, while the RuvA-RuvB complex plays an important role in the rescue of blocked DNA replication forks via replication fork reversal (RFR). RuvA specifically binds to HJ cruciform DNA, conferring on it an open structure. The RuvB hexamer acts as an ATP-dependent pump, pulling dsDNA into and through the RuvAB complex. HJ branch migration allows RuvC to scan DNA until it finds its consensus sequence, where it cleaves and resolves the cruciform DNA. This chain is Holliday junction branch migration complex subunit RuvA, found in Acinetobacter baumannii (strain AB307-0294).